We begin with the raw amino-acid sequence, 234 residues long: Protein CIST1 (234 aa).

The first 24 residues, 1–24, serve as a signal peptide directing secretion; that stretch reads MACPQLPPLLLLVLVVLLKAGVNY. Residues 25–180 are Extracellular-facing; it reads NTPFTDIVTS…GPRELHRNPS (156 aa). Over residues 41-121 the composition is skewed to polar residues; that stretch reads SPVSSLISSP…THPSSGSPSA (81 aa). The disordered stretch occupies residues 41–174; it reads SPVSSLISSP…PAPGDTGPRE (134 aa). The span at 122 to 140 shows a compositional bias: low complexity; sequence ELTPSSHSTLPSSESLTPH. Positions 141 to 159 are enriched in polar residues; it reads WSPTSHSPGTEPLTSTDQT. A helical transmembrane segment spans residues 181–201; that stretch reads VVVVVCLLVSLLLIGSVVMAV. Over 202–234 the chain is Cytoplasmic; the sequence is RFCHRNESKFENLDEVSMGSVNDRLSFAHHLQE.

Its subcellular location is the membrane. The chain is Protein CIST1 from Homo sapiens (Human).